We begin with the raw amino-acid sequence, 431 residues long: D-inositol 3-phosphate glycosyltransferase (431 aa).

His21 contacts 1D-myo-inositol 3-phosphate. Residues 27–28 (QP) and Gly35 each bind UDP-N-acetyl-alpha-D-glucosamine. Residues 32–37 (DAGGMN), Arg90, Tyr123, Thr147, and Arg167 contribute to the 1D-myo-inositol 3-phosphate site. Residues Arg241, Lys246, and Gln307 each coordinate UDP-N-acetyl-alpha-D-glucosamine. 3 residues coordinate Mg(2+): Tyr316, Arg317, and Ala319. UDP-N-acetyl-alpha-D-glucosamine is bound by residues Glu329 and Glu337. Thr343 provides a ligand contact to Mg(2+).

It belongs to the glycosyltransferase group 1 family. MshA subfamily. In terms of assembly, homodimer.

It carries out the reaction 1D-myo-inositol 3-phosphate + UDP-N-acetyl-alpha-D-glucosamine = 1D-myo-inositol 2-acetamido-2-deoxy-alpha-D-glucopyranoside 3-phosphate + UDP + H(+). Catalyzes the transfer of a N-acetyl-glucosamine moiety to 1D-myo-inositol 3-phosphate to produce 1D-myo-inositol 2-acetamido-2-deoxy-glucopyranoside 3-phosphate in the mycothiol biosynthesis pathway. The sequence is that of D-inositol 3-phosphate glycosyltransferase from Saccharomonospora viridis (strain ATCC 15386 / DSM 43017 / JCM 3036 / CCUG 5913 / NBRC 12207 / NCIMB 9602 / P101) (Thermoactinomyces viridis).